Here is a 336-residue protein sequence, read N- to C-terminus: Di/tripeptide transport system permease protein DppB (336 aa).

6 helical membrane passes run 10 to 30 (GLLIPTFFGVTLLTFALIRLI), 102 to 122 (LSLAAMLFAGTFGLLAGVIAA), 145 to 165 (IFWWGLILIMLFSVSLGWTPV), 198 to 218 (AVRHLILPAIVLGTIPLAVIA), 257 to 277 (LIPVLTVFGLQVGTLLAGAVL), and 307 to 327 (ILLVATLVILVNFVVDILYGL). The ABC transmembrane type-1 domain occupies 96–325 (FPATLELSLA…LVNFVVDILY (230 aa)).

It belongs to the binding-protein-dependent transport system permease family. OppBC subfamily. In terms of assembly, the complex is composed of two ATP-binding proteins (DppD and DppF), two transmembrane proteins (DppB and DppC) and a solute-binding protein (DppA1-A5). Five orthologous SBPs (DppA1-A5) are present in P.aeruginosa, which increases the substrate specificity of the DppBCDF transporter.

Its subcellular location is the cell inner membrane. Part of the ABC transporter DppABCDF involved in the uptake of various di/tripeptides. Is also involved in the uptake of phaseolotoxin, a toxic tripeptide inhibiting the enzyme ornithine carbamoyltransferase. Responsible for the translocation of the substrate across the membrane. This chain is Di/tripeptide transport system permease protein DppB, found in Pseudomonas aeruginosa (strain UCBPP-PA14).